The chain runs to 379 residues: Succinyl-diaminopimelate desuccinylase (379 aa).

Histidine 70 contacts Zn(2+). Aspartate 72 is an active-site residue. Aspartate 103 provides a ligand contact to Zn(2+). The Proton acceptor role is filled by glutamate 137. Glutamate 138, glutamate 166, and histidine 352 together coordinate Zn(2+).

It belongs to the peptidase M20A family. DapE subfamily. As to quaternary structure, homodimer. The cofactor is Zn(2+). Co(2+) serves as cofactor.

It catalyses the reaction N-succinyl-(2S,6S)-2,6-diaminopimelate + H2O = (2S,6S)-2,6-diaminopimelate + succinate. Its pathway is amino-acid biosynthesis; L-lysine biosynthesis via DAP pathway; LL-2,6-diaminopimelate from (S)-tetrahydrodipicolinate (succinylase route): step 3/3. In terms of biological role, catalyzes the hydrolysis of N-succinyl-L,L-diaminopimelic acid (SDAP), forming succinate and LL-2,6-diaminopimelate (DAP), an intermediate involved in the bacterial biosynthesis of lysine and meso-diaminopimelic acid, an essential component of bacterial cell walls. This chain is Succinyl-diaminopimelate desuccinylase, found in Burkholderia multivorans (strain ATCC 17616 / 249).